A 308-amino-acid chain; its full sequence is MAPGGSALKEVMESNSTGMDYEVKTAKVEVNNNKPTKPGSAGIGKYGIHSNNGVYELLECPVCTNLMYPPIHQCPNGHTLCSNCKLRVQNTCPTCRYELGNIRCLALEKVAESLEVPCRYQNLGCHDIFPYYSKLKHEQHCRFRPYTCPYAGSECSVTGDIPTLVVHLKDDHKVDMHDGCTFNHRYVKSNPHEVENATWMLTVFNCFGRQFCLHFEAFQLGMAPVYMAFLRFMGDENEAKKFSYSLEVGAHGRKLTWQGIPRSIRDSHRKVRDSQDGLIIPRNLALYFSGGDRQELKLRVTGRIWKEE.

The segment at 60–96 (CPVCTNLMYPPIHQCPNGHTLCSNCKLRVQNTCPTCR) adopts an RING-type zinc-finger fold. The SBD stretch occupies residues 110–303 (VAESLEVPCR…QELKLRVTGR (194 aa)). The SIAH-type zinc finger occupies 113–173 (SLEVPCRYQN…LVVHLKDDHK (61 aa)). Zn(2+)-binding residues include C118, C125, H137, C141, C148, C155, H167, and H172.

Belongs to the SINA (Seven in absentia) family. Interacts with RAP2-2. Interacts with SINAT6. Interacts with ATG6 and TRAF1A. Interacts with WAV3. Interacts with FREE1. Interacts with ELC/VPS23A.

The protein resides in the endosome. It localises to the multivesicular body. It is found in the cytoplasmic vesicle. The protein localises to the autophagosome. The catalysed reaction is S-ubiquitinyl-[E2 ubiquitin-conjugating enzyme]-L-cysteine + [acceptor protein]-L-lysine = [E2 ubiquitin-conjugating enzyme]-L-cysteine + N(6)-ubiquitinyl-[acceptor protein]-L-lysine.. It participates in protein modification; protein ubiquitination. Its function is as follows. E3 ubiquitin-protein ligase that mediates ubiquitination and subsequent proteasomal degradation of target proteins. E3 ubiquitin ligases accept ubiquitin from an E2 ubiquitin-conjugating enzyme in the form of a thioester and then directly transfers the ubiquitin to targeted substrates. It probably triggers the ubiquitin-mediated degradation of different substrates. Mediates the proteasomal-dependent degradation of ATG6, a component of the autophagosome complex. Requires TRAF1A/MUSE14 and TRAF1B/MUSE13 to target ATG6 for ubiquitination and subsequent regulation of autophagosome assembly. Modulates directly the ubiquitination and proteasomal-dependent degradation of FREE1, a component of the ESCRT-I complex. Modulates directly the ubiquitination and proteasomal-dependent degradation of ELC/VPS23A, a component of the ESCRT-I complex. The chain is E3 ubiquitin-protein ligase SINAT2 from Arabidopsis thaliana (Mouse-ear cress).